We begin with the raw amino-acid sequence, 254 residues long: Adenosylcobinamide-GDP ribazoletransferase (254 aa).

The next 7 helical transmembrane spans lie at 29–49 (LFWFPVVGLLLGSIQAALGYF), 50–70 (TSLLGWNELSAAFVVLGGIAL), 98–118 (IMKDPNVGSFGAIALSGMMLL), 121–141 (IAILKLVDIGAFACIAAGVLL), 170–190 (AGVVHIVVTSALTLLFLFPLL), 198–218 (LYAVVAMISAALAAALLTGLL), and 230–250 (VLGAGSEVTELFVWIAAALSA).

Belongs to the CobS family. The cofactor is Mg(2+).

The protein resides in the cell inner membrane. It carries out the reaction alpha-ribazole + adenosylcob(III)inamide-GDP = adenosylcob(III)alamin + GMP + H(+). The catalysed reaction is alpha-ribazole 5'-phosphate + adenosylcob(III)inamide-GDP = adenosylcob(III)alamin 5'-phosphate + GMP + H(+). The protein operates within cofactor biosynthesis; adenosylcobalamin biosynthesis; adenosylcobalamin from cob(II)yrinate a,c-diamide: step 7/7. Its function is as follows. Joins adenosylcobinamide-GDP and alpha-ribazole to generate adenosylcobalamin (Ado-cobalamin). Also synthesizes adenosylcobalamin 5'-phosphate from adenosylcobinamide-GDP and alpha-ribazole 5'-phosphate. The protein is Adenosylcobinamide-GDP ribazoletransferase of Pelodictyon phaeoclathratiforme (strain DSM 5477 / BU-1).